The sequence spans 696 residues: Polyribonucleotide nucleotidyltransferase (696 aa).

Positions 483 and 489 each coordinate Mg(2+). A KH domain is found at 550 to 609; the sequence is PRITTIWVKVDKIRDVIGSGGKNIRSVTEATGVSIDIDDTGKINIASTNKEACDLAIKMI. The S1 motif domain occupies 619–687; that stretch reads GKLYMGTVKK…KQGKIKLSRK (69 aa).

The protein belongs to the polyribonucleotide nucleotidyltransferase family. It depends on Mg(2+) as a cofactor.

It is found in the cytoplasm. It carries out the reaction RNA(n+1) + phosphate = RNA(n) + a ribonucleoside 5'-diphosphate. Functionally, involved in mRNA degradation. Catalyzes the phosphorolysis of single-stranded polyribonucleotides processively in the 3'- to 5'-direction. This chain is Polyribonucleotide nucleotidyltransferase, found in Citrifermentans bemidjiense (strain ATCC BAA-1014 / DSM 16622 / JCM 12645 / Bem) (Geobacter bemidjiensis).